The following is a 165-amino-acid chain: Probable chemoreceptor glutamine deamidase CheD (165 aa).

Belongs to the CheD family.

The catalysed reaction is L-glutaminyl-[protein] + H2O = L-glutamyl-[protein] + NH4(+). Probably deamidates glutamine residues to glutamate on methyl-accepting chemotaxis receptors (MCPs), playing an important role in chemotaxis. The polypeptide is Probable chemoreceptor glutamine deamidase CheD (Geobacillus kaustophilus (strain HTA426)).